A 133-amino-acid polypeptide reads, in one-letter code: ATP synthase epsilon chain, chloroplastic (133 aa).

It belongs to the ATPase epsilon chain family. In terms of assembly, F-type ATPases have 2 components, CF(1) - the catalytic core - and CF(0) - the membrane proton channel. CF(1) has five subunits: alpha(3), beta(3), gamma(1), delta(1), epsilon(1). CF(0) has three main subunits: a, b and c.

It localises to the plastid. It is found in the chloroplast thylakoid membrane. Functionally, produces ATP from ADP in the presence of a proton gradient across the membrane. The sequence is that of ATP synthase epsilon chain, chloroplastic from Eucalyptus globulus subsp. globulus (Tasmanian blue gum).